Here is a 201-residue protein sequence, read N- to C-terminus: 3-isopropylmalate dehydratase small subunit (201 aa).

Belongs to the LeuD family. LeuD type 1 subfamily. As to quaternary structure, heterodimer of LeuC and LeuD.

The enzyme catalyses (2R,3S)-3-isopropylmalate = (2S)-2-isopropylmalate. Its pathway is amino-acid biosynthesis; L-leucine biosynthesis; L-leucine from 3-methyl-2-oxobutanoate: step 2/4. Functionally, catalyzes the isomerization between 2-isopropylmalate and 3-isopropylmalate, via the formation of 2-isopropylmaleate. This Shewanella sp. (strain MR-4) protein is 3-isopropylmalate dehydratase small subunit.